We begin with the raw amino-acid sequence, 685 residues long: Multicopper oxidase VdtB (685 aa).

Positions 1 to 17 (MPAYLLLLACNVLLVLG) are cleaved as a signal peptide. 2 consecutive Plastocyanin-like domains span residues 26–139 (LTWE…IRRK) and 168–368 (IMML…RYKN). The N-linked (GlcNAc...) asparagine glycan is linked to asparagine 71. Residues histidine 75, histidine 77, histidine 119, and histidine 121 each coordinate Cu cation. Asparagine 178, asparagine 229, asparagine 253, asparagine 432, and asparagine 475 each carry an N-linked (GlcNAc...) asparagine glycan. The region spanning 466-585 (DDDLIIRTQN…DNGMAMAILD (120 aa)) is the Plastocyanin-like 3 domain. Histidine 500 serves as a coordination point for Cu cation. Asparagine 517 is a glycosylation site (N-linked (GlcNAc...) asparagine). Residues 627–647 (SLVWAGGAAVVLLSLFIGGLW) traverse the membrane as a helical segment.

Belongs to the multicopper oxidase family.

Its subcellular location is the membrane. The enzyme catalyses 4 semiviriditoxin + O2 = 2 (M)-viriditoxin + 2 H2O. It functions in the pathway secondary metabolite biosynthesis. Multicopper oxidase; part of the gene cluster that mediates the biosynthesis of viriditoxin, one of the 'classical' secondary metabolites produced by fungi and that has antibacterial activity. The first step is performed by the polyketide synthase VdtA which condenses one acetyl-CoA and 6 malonyl-CoA units to form the heptaketide monomer backbone of viriditoxin. The product of VdtA is then O-methylated on C7 by the O-methyltransferase VdtC. The O-methyl group is important for the stereoselective coupling of the monomers at the final step of viriditoxin biosynthesis. The short-chain dehydrogenase/reductase VdtF then acts as a stereospecific reductase converting the pyrone to dihydropyrone via the reduction of the C3-C4 double bond. The FAD-binding monooxygenase VdtE then converts the ketone group into a methyl-ester group to yield semi-viriditoxin. Finally, the laccase VdtB is involved in dimerization of 2 semi-viriditoxin molecules to yield the final viriditoxin. VdtB is responsible for the regioselective 6,6'-coupling of semi-viriditoxin, which yields (M)-viriditoxin and (P)-viriditoxin at a ratio of 1:2. The non-catalytic carboxylesterase-like protein VdtD affects the stereochemistical outcome of the coupling. The highly reducing polyketide synthase VdtX is not involved in viriditoxin synthesis, but might possibly play a role in the production of additional metabolites not identified yet. This Byssochlamys spectabilis (Paecilomyces variotii) protein is Multicopper oxidase VdtB.